Consider the following 223-residue polypeptide: Small ribosomal subunit protein uS11m (223 aa).

Residues 1–38 constitute a mitochondrion transit peptide; the sequence is MVLKHSVTYNLSFFISFTFSSIFFSSLILFLVYKSVLS.

The protein belongs to the universal ribosomal protein uS11 family. In terms of assembly, component of the mitochondrial small ribosomal subunit (mt-SSU). Mature yeast 74S mitochondrial ribosomes consist of a small (37S) and a large (54S) subunit. The 37S small subunit contains a 15S ribosomal RNA (15S mt-rRNA) and at least 32 different proteins. The 54S large subunit contains a 21S rRNA (21S mt-rRNA) and at least 45 different proteins.

The protein resides in the mitochondrion. Component of the mitochondrial ribosome (mitoribosome), a dedicated translation machinery responsible for the synthesis of mitochondrial genome-encoded proteins, including at least some of the essential transmembrane subunits of the mitochondrial respiratory chain. The mitoribosomes are attached to the mitochondrial inner membrane and translation products are cotranslationally integrated into the membrane. The polypeptide is Small ribosomal subunit protein uS11m (mrps18) (Schizosaccharomyces pombe (strain 972 / ATCC 24843) (Fission yeast)).